The sequence spans 261 residues: Kallikrein 1-related peptidase b11 (261 aa).

Positions 1-18 (MWFLILFLALSLGGIDAA) are cleaved as a signal peptide. A propeptide spans 19 to 24 (PPVQSR) (activation peptide). A Peptidase S1 domain is found at 25-258 (IVGGFNCEKN…FTNWIKDTMA (234 aa)). 5 disulfides stabilise this stretch: cysteine 31/cysteine 173, cysteine 50/cysteine 66, cysteine 152/cysteine 219, cysteine 184/cysteine 198, and cysteine 209/cysteine 234. Residue histidine 65 is the Charge relay system of the active site. A glycan (N-linked (GlcNAc...) asparagine) is linked at asparagine 102. Aspartate 120 serves as the catalytic Charge relay system. Serine 213 serves as the catalytic Charge relay system.

Belongs to the peptidase S1 family. Kallikrein subfamily.

It catalyses the reaction Preferential cleavage of Arg-|-Xaa bonds in small molecule substrates. Highly selective action to release kallidin (lysyl-bradykinin) from kininogen involves hydrolysis of Met-|-Xaa or Leu-|-Xaa.. In terms of biological role, glandular kallikreins cleave Met-Lys and Arg-Ser bonds in kininogen to release Lys-bradykinin. This chain is Kallikrein 1-related peptidase b11 (Klk1b11), found in Mus musculus (Mouse).